Consider the following 120-residue polypeptide: Large ribosomal subunit protein uL18 (120 aa).

It belongs to the universal ribosomal protein uL18 family. Part of the 50S ribosomal subunit; part of the 5S rRNA/L5/L18/L25 subcomplex. Contacts the 5S and 23S rRNAs.

Its function is as follows. This is one of the proteins that bind and probably mediate the attachment of the 5S RNA into the large ribosomal subunit, where it forms part of the central protuberance. This Brevibacillus brevis (strain 47 / JCM 6285 / NBRC 100599) protein is Large ribosomal subunit protein uL18.